The primary structure comprises 1207 residues: Dermatan-sulfate epimerase-like protein (1207 aa).

The first 22 residues, 1–22, serve as a signal peptide directing secretion; sequence MAFMFTEHLLFLTLMMCSFSTC. N-linked (GlcNAc...) asparagine glycans are attached at residues N28, N661, N683, and N704. The next 2 membrane-spanning stretches (helical) occupy residues 761-781 and 798-818; these read FPFG…SLVI and CVLI…WSTC. N869 carries N-linked (GlcNAc...) asparagine glycosylation.

The protein belongs to the dermatan-sulfate isomerase family.

It is found in the membrane. This is Dermatan-sulfate epimerase-like protein (Dsel) from Mus musculus (Mouse).